The primary structure comprises 544 residues: Putative ankyrin repeat protein L289 (544 aa).

ANK repeat units lie at residues lysine 31–glutamate 71, histidine 72–isoleucine 105, tyrosine 110–histidine 143, leucine 147–serine 181, glutamine 185–isoleucine 218, lysine 222–phenylalanine 255, tyrosine 259–isoleucine 297, aspartate 300–serine 339, asparagine 340–isoleucine 374, glutamine 378–asparagine 413, and threonine 414–lysine 447.

In Acanthamoeba polyphaga mimivirus (APMV), this protein is Putative ankyrin repeat protein L289.